The following is an 860-amino-acid chain: Alanine--tRNA ligase (860 aa).

The Zn(2+) site is built by His-563, His-567, Cys-665, and His-669. A disordered region spans residues 824-843 (VGGKGGGRPDMAQAGGTDSS).

The protein belongs to the class-II aminoacyl-tRNA synthetase family. Zn(2+) serves as cofactor.

Its subcellular location is the cytoplasm. It catalyses the reaction tRNA(Ala) + L-alanine + ATP = L-alanyl-tRNA(Ala) + AMP + diphosphate. Functionally, catalyzes the attachment of alanine to tRNA(Ala) in a two-step reaction: alanine is first activated by ATP to form Ala-AMP and then transferred to the acceptor end of tRNA(Ala). Also edits incorrectly charged Ser-tRNA(Ala) and Gly-tRNA(Ala) via its editing domain. The protein is Alanine--tRNA ligase of Vibrio vulnificus (strain YJ016).